Reading from the N-terminus, the 218-residue chain is Ependymin (218 aa).

A signal peptide spans 1–20 (MHTVKLLCVVFSCLCAVAWG). 2 N-linked (GlcNAc...) asparagine glycosylation sites follow: Asn74 and Asn97.

It belongs to the ependymin family. As to quaternary structure, forms disulfide-linked dimers. Post-translationally, binds calcium through the terminal sialic acids.

It is found in the secreted. Functionally, may play a role in neural plasticity. May be involved during axon regeneration. The sequence is that of Ependymin (epd) from Devario aequipinnatus (Giant danio).